The chain runs to 334 residues: AA9 family lytic polysaccharide monooxygenase A (334 aa).

A signal peptide spans 1–22; it reads MSPSFKSTAILGAVALAARVRA. Cu(2+) is bound by residues H23 and H108. Intrachain disulfides connect C78/C200 and C119/C123. N160 carries N-linked (GlcNAc...) asparagine glycosylation. O2 is bound by residues H186 and Q195. Y197 is a Cu(2+) binding site. An N-linked (GlcNAc...) asparagine glycan is attached at N208. Residues 244–304 form a disordered region; that stretch reads GPALYTGGSS…PSPSLPVEIP (61 aa). The span at 249-265 shows a compositional bias: low complexity; the sequence is TGGSSPSPNPPTSTQSP.

Belongs to the polysaccharide monooxygenase AA9 family. It depends on Cu(2+) as a cofactor.

It is found in the secreted. The catalysed reaction is [(1-&gt;4)-beta-D-glucosyl]n+m + reduced acceptor + O2 = 4-dehydro-beta-D-glucosyl-[(1-&gt;4)-beta-D-glucosyl]n-1 + [(1-&gt;4)-beta-D-glucosyl]m + acceptor + H2O.. Lytic polysaccharide monooxygenase (LPMO) that depolymerizes crystalline and amorphous polysaccharides via the oxidation of scissile alpha- or beta-(1-4)-glycosidic bonds, yielding C1 or C4 oxidation products. Catalysis by LPMOs requires the reduction of the active-site copper from Cu(II) to Cu(I) by a reducing agent and H(2)O(2) or O(2) as a cosubstrate. Active on hemicelluloses, including xylan, glucomannan, and xyloglucan. Shows clear activity on cellooligosaccharides, generating C4 oxidation products. Also displays activity on konjac glucomannan (KGM), a linear beta-1,4-linked mannan with randomly distributed glucosyl residues; as well as trace activity on lichenan, a linear beta-1,3-beta-1,4-glucan with a 1:2 ratio of beta-1,3 to beta-1,4 linkages. Has no activity on ivory nut mannan (INM), a linear beta-1,4-linked mannan without substitutions. This Malbranchea cinnamomea (Thermophilic fungus) protein is AA9 family lytic polysaccharide monooxygenase A.